The primary structure comprises 1401 residues: DNA-directed RNA polymerase subunit beta'' (1401 aa).

Cysteine 224, cysteine 295, cysteine 302, and cysteine 305 together coordinate Zn(2+).

It belongs to the RNA polymerase beta' chain family. RpoC2 subfamily. In plastids the minimal PEP RNA polymerase catalytic core is composed of four subunits: alpha, beta, beta', and beta''. When a (nuclear-encoded) sigma factor is associated with the core the holoenzyme is formed, which can initiate transcription. The cofactor is Zn(2+).

It is found in the plastid. The protein localises to the chloroplast. The catalysed reaction is RNA(n) + a ribonucleoside 5'-triphosphate = RNA(n+1) + diphosphate. DNA-dependent RNA polymerase catalyzes the transcription of DNA into RNA using the four ribonucleoside triphosphates as substrates. The polypeptide is DNA-directed RNA polymerase subunit beta'' (Ipomoea purpurea (Common morning glory)).